Reading from the N-terminus, the 177-residue chain is MMAKPKKTIPAKLSDERIVIYDKDGISRLNEKRYGELHENFLSLSFVEGLYLVSKNWISLRDKNKKLLSFEELFDVAQNIDRKLCIRYLAYKDLRNRGYTVRTGLKYGSDFRLYERSNIDEIHSRYLVKVFSEEIPCEISEITGFVRVAHSVRKELIIAIVDADGSVVYYNMGYLKL.

Residues tyrosine 114, histidine 123, and lysine 154 contribute to the active site.

This sequence belongs to the tRNA-intron endonuclease family. Archaeal short subfamily. In terms of assembly, homotetramer; although the tetramer contains four active sites, only two participate in the cleavage. Therefore, it should be considered as a dimer of dimers.

The catalysed reaction is pretRNA = a 3'-half-tRNA molecule with a 5'-OH end + a 5'-half-tRNA molecule with a 2',3'-cyclic phosphate end + an intron with a 2',3'-cyclic phosphate and a 5'-hydroxyl terminus.. In terms of biological role, endonuclease that removes tRNA introns. Cleaves pre-tRNA at the 5'- and 3'-splice sites to release the intron. The products are an intron and two tRNA half-molecules bearing 2',3' cyclic phosphate and 5'-OH termini. Recognizes a pseudosymmetric substrate in which 2 bulged loops of 3 bases are separated by a stem of 4 bp. This is tRNA-splicing endonuclease from Methanococcus maripaludis (strain DSM 14266 / JCM 13030 / NBRC 101832 / S2 / LL).